The following is a 492-amino-acid chain: NADH-quinone oxidoreductase subunit N (492 aa).

The next 14 helical transmembrane spans lie at 5 to 25, 37 to 57, 72 to 92, 104 to 124, 129 to 149, 164 to 184, 205 to 225, 239 to 259, 276 to 295, 302 to 322, 337 to 357, 380 to 400, 414 to 434, and 466 to 486; these read PMTALLPDALVMAAIVVAWLI, TYFIALLSTVVAGIWFAIDAL, VVDPFASVMKAVVSLGYAVSI, LYEGNFFLLGMFSLLGQLVMI, FLTLYLGLELMSLSLYAAIAL, YVLGALASGFLLYGISMLYGA, VVLLFGVIFIVAGVAFKMGAV, PTAMTLIVGGGPKVAAFAWGL, MLVILAALSLIVGNITGIVQ, LAYSAISNMGFVLLGLLAGVV, MFYSIVYLITTLGSFGVVMLL, FAFVMMVMMFSLAGIPPAVGF, GLTWLAVLAVITSLFGAFYYL, and VAVLVLGIVPGPLMSICLNAI.

Belongs to the complex I subunit 2 family. NDH-1 is composed of 14 different subunits. Subunits NuoA, H, J, K, L, M, N constitute the membrane sector of the complex.

It localises to the cell inner membrane. The catalysed reaction is a quinone + NADH + 5 H(+)(in) = a quinol + NAD(+) + 4 H(+)(out). In terms of biological role, NDH-1 shuttles electrons from NADH, via FMN and iron-sulfur (Fe-S) centers, to quinones in the respiratory chain. The immediate electron acceptor for the enzyme in this species is believed to be ubiquinone. Couples the redox reaction to proton translocation (for every two electrons transferred, four hydrogen ions are translocated across the cytoplasmic membrane), and thus conserves the redox energy in a proton gradient. This chain is NADH-quinone oxidoreductase subunit N, found in Paraburkholderia phymatum (strain DSM 17167 / CIP 108236 / LMG 21445 / STM815) (Burkholderia phymatum).